The sequence spans 631 residues: Origin recognition complex subunit 1 (631 aa).

Low complexity-rich tracts occupy residues 1–14 (MTDE…YPPI) and 22–37 (KLNN…NNNH). Positions 1–164 (MTDESSSSIS…EEEDEEGKFN (164 aa)) are disordered. Over residues 55-80 (DNEKIGFSDPENEKINKHKASFKDSN) the composition is skewed to basic and acidic residues. Acidic residues predominate over residues 91-104 (EDTDDDDYEDEDED). Over residues 105–133 (ENHKIKDESDNSEDFNNHTKNTTDLDEGF) the composition is skewed to basic and acidic residues. A compositionally biased stretch (acidic residues) spans 141–160 (ESEEEEEEEEYEEEEEEDEE). ATP contacts are provided by residues Val230 and 265–273 (GMPGTGKTA). Mg(2+)-binding residues include Asp361 and Glu362. Positions 362, 395, and 460 each coordinate ATP.

It belongs to the ORC1 family. ORC is composed of six subunits.

The protein resides in the nucleus. Functionally, component of the origin recognition complex (ORC) that binds origins of replication. DNA-binding is ATP-dependent, however specific DNA sequences that define origins of replication have not been identified so far. ORC is required to assemble the pre-replication complex necessary to initiate DNA replication. This is Origin recognition complex subunit 1 (orcA) from Dictyostelium discoideum (Social amoeba).